We begin with the raw amino-acid sequence, 172 residues long: Nicotinamide-nucleotide adenylyltransferase (172 aa).

This sequence belongs to the archaeal NMN adenylyltransferase family.

The protein resides in the cytoplasm. The enzyme catalyses beta-nicotinamide D-ribonucleotide + ATP + H(+) = diphosphate + NAD(+). It participates in cofactor biosynthesis; NAD(+) biosynthesis; NAD(+) from nicotinamide D-ribonucleotide: step 1/1. This chain is Nicotinamide-nucleotide adenylyltransferase, found in Sulfurisphaera tokodaii (strain DSM 16993 / JCM 10545 / NBRC 100140 / 7) (Sulfolobus tokodaii).